The sequence spans 61 residues: Large ribosomal subunit protein eL37 (61 aa).

The Zn(2+) site is built by cysteine 19, cysteine 22, cysteine 34, and cysteine 37. The C4-type zinc-finger motif lies at 19-37 (CRRCGRNAYNVSKHYCAAC).

The protein belongs to the eukaryotic ribosomal protein eL37 family. Zn(2+) is required as a cofactor.

Its function is as follows. Binds to the 23S rRNA. The sequence is that of Large ribosomal subunit protein eL37 from Saccharolobus islandicus (strain Y.N.15.51 / Yellowstone #2) (Sulfolobus islandicus).